Consider the following 985-residue polypeptide: Guanine nucleotide exchange protein smcr8b (985 aa).

A uDENN FLCN/SMCR8-type domain is found at 47–225 (ISSAKLKKDF…VKCSSEREPI (179 aa)). Residues 242–292 (NEKSSHTDEISPQEKDGCGNSRKVEVKLENENRSHFEHEQYGKQRKDKPDK) are compositionally biased toward basic and acidic residues. Disordered stretches follow at residues 242–301 (NEKS…PLAN), 502–528 (QSQV…SPAE), and 639–659 (EESP…EDNN). The 506-residue stretch at 390 to 895 (RLKTLEELCD…LINLLVEPKS (506 aa)) folds into the cDENN FLCN/SMCR8-type domain. The segment covering 502–514 (QSQVQHSTLNTPS) has biased composition (polar residues). The region spanning 904–962 (FTFAQSVQSKLVTKAFLLTFSHGHPSPSRPQGSSGTECFLSELHTDDKKILRYLSELIK) is the dDENN FLCN/SMCR8-type domain.

This sequence belongs to the SMCR8 family. As to quaternary structure, component of the C9orf72-SMCR8 complex. The C9orf72-SMCR8 complex associates with the ATG1/ULK1 kinase complex.

The protein localises to the cytoplasm. The protein resides in the nucleus. In terms of biological role, component of the C9orf72-SMCR8 complex, a complex that has guanine nucleotide exchange factor (GEF) activity and regulates autophagy. In the complex, C9orf72 and SMCR8 probably constitute the catalytic subunits that promote the exchange of GDP to GTP, converting inactive GDP-bound RAB8A and RAB39B into their active GTP-bound form, thereby promoting autophagosome maturation. The C9orf72-SMCR8 complex also acts as a negative regulator of autophagy initiation by interacting with the ATG1/ULK1 kinase complex and inhibiting its protein kinase activity. In Danio rerio (Zebrafish), this protein is Guanine nucleotide exchange protein smcr8b (smcr8b).